We begin with the raw amino-acid sequence, 479 residues long: PRAME family member 18 (479 aa).

One copy of the LRR 1 repeat lies at Q15–P38. The stretch at R97–C124 is one LRR 1; degenerate repeat. One copy of the LRR 2; degenerate repeat lies at H179–Y203. The LRR 3; degenerate repeat unit spans residues P204–Q230. One copy of the LRR 4; degenerate repeat lies at M231–R265. 5 LRR repeats span residues L266–L291, R292–K323, Q324–A342, A348–R375, and C376–H400.

This sequence belongs to the PRAME family.

This is PRAME family member 18 from Homo sapiens (Human).